A 165-amino-acid polypeptide reads, in one-letter code: Probable cell wall protein PGA15 (165 aa).

The first 16 residues, 1-16 (MKFIIILFTLISIVTA), serve as a signal peptide directing secretion. Serine 143 is lipidated: GPI-anchor amidated serine. Residues 144-165 (GAANYLTSFSIGTFFVFVLGLI) constitute a propeptide, removed in mature form.

Belongs to the IHD1 family. In terms of processing, the GPI-anchor is attached to the protein in the endoplasmic reticulum and serves to target the protein to the cell surface. There, the glucosamine-inositol phospholipid moiety is cleaved off and the GPI-modified mannoprotein is covalently attached via its lipidless GPI glycan remnant to the 1,6-beta-glucan of the outer cell wall layer.

It localises to the secreted. Its subcellular location is the cell wall. The protein resides in the membrane. Functionally, probable GPI-anchored cell wall protein that may be involved in cell wall organization, hyphal growth, as well as in virulence. In Candida albicans (strain SC5314 / ATCC MYA-2876) (Yeast), this protein is Probable cell wall protein PGA15 (PGA15).